An 84-amino-acid polypeptide reads, in one-letter code: U8-theraphotoxin-Hhn1g (84 aa).

The first 21 residues, 1–21 (MKVVLLVCLVWMMAMMELVSC), serve as a signal peptide directing secretion. 5 disulfides stabilise this stretch: C23/C35, C29/C44, C34/C67, C54/C75, and C69/C81.

Belongs to the AVIT (prokineticin) family. Expressed by the venom gland.

Its subcellular location is the secreted. The chain is U8-theraphotoxin-Hhn1g from Cyriopagopus hainanus (Chinese bird spider).